We begin with the raw amino-acid sequence, 957 residues long: Thioredoxin domain-containing protein 11 (957 aa).

The segment covering 1–13 has biased composition (gly residues); the sequence is MSECGGRGGGGGS. The tract at residues 1–47 is disordered; it reads MSECGGRGGGGGSSSSSDDAEDEGGGGGPAGSGSLSPAPAASSEGRL. Positions 32–44 are enriched in low complexity; the sequence is SGSLSPAPAASSE. The chain crosses the membrane as a helical span at residues 64-84; that stretch reads LLCGAVALGCALLLALKFTCS. The Thioredoxin 1 domain occupies 91-213; it reads IPAKPPVSFF…IEKFVRRVMK (123 aa). 2 disulfides stabilise this stretch: C441/C444 and C691/C694. The Thioredoxin 2 domain maps to 621–771; the sequence is LDPKQALMKF…LLRFILHHSD (151 aa). A coiled-coil region spans residues 785-889; that stretch reads AECLQNEAVL…ADASETLLTE (105 aa). The segment covering 904–925 has biased composition (basic and acidic residues); the sequence is LEGRDGADDRVPPSKARSEHPE. Residues 904–957 are disordered; sequence LEGRDGADDRVPPSKARSEHPEPPGAPRLPASTPLPANISSTLASEGSPENRTD. Polar residues predominate over residues 941–951; sequence NISSTLASEGS.

Belongs to the protein disulfide isomerase family. In terms of assembly, interacts with the cytoplasmic part of DUOX1 and DUOX2. Interacts with TPO and CYBA.

It localises to the endoplasmic reticulum membrane. Its function is as follows. May act as a redox regulator involved in DUOX proteins folding. The interaction with DUOX1 and DUOX2 suggest that it belongs to a multiprotein complex constituting the thyroid H(2)O(2) generating system. It is however not sufficient to assist DUOX1 and DUOX2 in H(2)O(2) generation. The sequence is that of Thioredoxin domain-containing protein 11 (TXNDC11) from Bos taurus (Bovine).